The primary structure comprises 577 residues: MRSHFCTEISEKDVGKTIKVAGWCNTYRDHGGVVFIDLRDKSGLVQLVCDPSSKAYEKALEVRSEFVLVAKGRVRLRGPGLENPKLKTGKIEIVLEELVIENKSATPPIEIGNKNVNEDLRLKYRYLDLRSLNAYEIFKLRSEVALITRNTLAQKGFLEIETPILSKTTPEGARDYLVPSRVHEGEFFALPQSPQLFKQLLMVGGMDRYFQIARCFRDEDLRADRQPEFTQIDAEMSFCDENDVMGVVEDLLQAIFKAVGHTISKPFKRMPYKEAMENYGSDKPDLRFELPLIEVGDCFRDSSNAIFSNIAKDPKNKRIKALNVKGADAVFSRSVLKELEEFVRQFGAQGLAYLQIKEDGIKGPLVKFLSEKGLKNILEKTGAQTGDIVFFGAGDKKIVLDYMGRLRLKVAETLDLIDKDALNFLWVVNFPMFEKTENGYHAAHHPFTMPKNIECEDIEEVEAHAYDVVLNGVELGGGSIRIHKEEMQKKVFEKINIHEEEAQKKFGFLLEALKFGAPPHGGFAIGFDRLIMLMTKSHSIRDVIAFPKTQKASCLLTDAPSPINEEQLRELHIRLRK.

Glu-171 is a binding site for L-aspartate. The segment at Gln-195 to Lys-198 is aspartate. Arg-217 provides a ligand contact to L-aspartate. Residues Arg-217–Glu-219 and Gln-226 contribute to the ATP site. His-444 is an L-aspartate binding site. Residue Glu-474 participates in ATP binding. Position 481 (Arg-481) interacts with L-aspartate. An ATP-binding site is contributed by Gly-526–Arg-529.

Belongs to the class-II aminoacyl-tRNA synthetase family. Type 1 subfamily. In terms of assembly, homodimer.

It is found in the cytoplasm. It catalyses the reaction tRNA(Asx) + L-aspartate + ATP = L-aspartyl-tRNA(Asx) + AMP + diphosphate. In terms of biological role, aspartyl-tRNA synthetase with relaxed tRNA specificity since it is able to aspartylate not only its cognate tRNA(Asp) but also tRNA(Asn). Reaction proceeds in two steps: L-aspartate is first activated by ATP to form Asp-AMP and then transferred to the acceptor end of tRNA(Asp/Asn). This chain is Aspartate--tRNA(Asp/Asn) ligase, found in Helicobacter pylori (strain HPAG1).